The chain runs to 222 residues: Orotate phosphoribosyltransferase (222 aa).

Lys29 is a binding site for 5-phospho-alpha-D-ribose 1-diphosphate. Orotate is bound at residue Phe37 to Phe38. 5-phospho-alpha-D-ribose 1-diphosphate is bound by residues Tyr75–Lys76, Arg101, Lys102, Lys105, His107, and Asp126–Ser134. Orotate-binding residues include Ser130 and Arg158.

Belongs to the purine/pyrimidine phosphoribosyltransferase family. PyrE subfamily. As to quaternary structure, homodimer. It depends on Mg(2+) as a cofactor.

It carries out the reaction orotidine 5'-phosphate + diphosphate = orotate + 5-phospho-alpha-D-ribose 1-diphosphate. Its pathway is pyrimidine metabolism; UMP biosynthesis via de novo pathway; UMP from orotate: step 1/2. Its function is as follows. Catalyzes the transfer of a ribosyl phosphate group from 5-phosphoribose 1-diphosphate to orotate, leading to the formation of orotidine monophosphate (OMP). The chain is Orotate phosphoribosyltransferase from Polynucleobacter asymbioticus (strain DSM 18221 / CIP 109841 / QLW-P1DMWA-1) (Polynucleobacter necessarius subsp. asymbioticus).